Consider the following 241-residue polypeptide: 2,3,4,5-tetrahydropyridine-2,6-dicarboxylate N-acetyltransferase (241 aa).

Belongs to the transferase hexapeptide repeat family. DapH subfamily.

It catalyses the reaction (S)-2,3,4,5-tetrahydrodipicolinate + acetyl-CoA + H2O = L-2-acetamido-6-oxoheptanedioate + CoA. It functions in the pathway amino-acid biosynthesis; L-lysine biosynthesis via DAP pathway; LL-2,6-diaminopimelate from (S)-tetrahydrodipicolinate (acetylase route): step 1/3. Its function is as follows. Catalyzes the transfer of an acetyl group from acetyl-CoA to tetrahydrodipicolinate. This is 2,3,4,5-tetrahydropyridine-2,6-dicarboxylate N-acetyltransferase from Caldanaerobacter subterraneus subsp. tengcongensis (strain DSM 15242 / JCM 11007 / NBRC 100824 / MB4) (Thermoanaerobacter tengcongensis).